A 503-amino-acid chain; its full sequence is Probable inactive beta-glucosidase 33 (503 aa).

An N-terminal signal peptide occupies residues 1–30 (MATGELALVSSLFIVVVFLLLGAVAREASA). A beta-D-glucoside-binding positions include Q50, H150, and 195-196 (NQ). A disulfide bridge links C215 with C223. N-linked (GlcNAc...) asparagine glycosylation is present at N222. Residues Y339 and E399 each contribute to the a beta-D-glucoside site. Catalysis depends on E399, which acts as the Nucleophile. N-linked (GlcNAc...) asparagine glycosylation occurs at N436. Residues W446, 453–454 (EF), and F462 contribute to the a beta-D-glucoside site.

Belongs to the glycosyl hydrolase 1 family.

This chain is Probable inactive beta-glucosidase 33 (BGLU33), found in Oryza sativa subsp. japonica (Rice).